The primary structure comprises 684 residues: Chaperone protein HtpG (684 aa).

The interval 1–329 (MSKKGTIGVT…SPDIPLNVSR (329 aa)) is a; substrate-binding. A b region spans residues 330 to 548 (SYLQSDANVK…FMRRMRDMAQ (219 aa)). Residues 549–684 (LQPGMSFYGE…EFIRRSQRLL (136 aa)) are c.

The protein belongs to the heat shock protein 90 family. As to quaternary structure, homodimer.

Its subcellular location is the cytoplasm. Functionally, molecular chaperone. Has ATPase activity. In Porphyromonas gingivalis (strain ATCC BAA-308 / W83), this protein is Chaperone protein HtpG.